Consider the following 256-residue polypeptide: Tryptophan synthase alpha chain (256 aa).

Active-site proton acceptor residues include E44 and D55.

It belongs to the TrpA family. Tetramer of two alpha and two beta chains.

The enzyme catalyses (1S,2R)-1-C-(indol-3-yl)glycerol 3-phosphate + L-serine = D-glyceraldehyde 3-phosphate + L-tryptophan + H2O. It functions in the pathway amino-acid biosynthesis; L-tryptophan biosynthesis; L-tryptophan from chorismate: step 5/5. Functionally, the alpha subunit is responsible for the aldol cleavage of indoleglycerol phosphate to indole and glyceraldehyde 3-phosphate. The polypeptide is Tryptophan synthase alpha chain (Coxiella burnetii (strain CbuK_Q154) (Coxiella burnetii (strain Q154))).